We begin with the raw amino-acid sequence, 290 residues long: Glycine--tRNA ligase alpha subunit (290 aa).

It belongs to the class-II aminoacyl-tRNA synthetase family. In terms of assembly, tetramer of two alpha and two beta subunits.

Its subcellular location is the cytoplasm. It catalyses the reaction tRNA(Gly) + glycine + ATP = glycyl-tRNA(Gly) + AMP + diphosphate. The sequence is that of Glycine--tRNA ligase alpha subunit from Maridesulfovibrio salexigens (strain ATCC 14822 / DSM 2638 / NCIMB 8403 / VKM B-1763) (Desulfovibrio salexigens).